Here is a 362-residue protein sequence, read N- to C-terminus: Putative HLA class I histocompatibility antigen, alpha chain H (362 aa).

A signal peptide spans 1 to 24 (MVLMAPRTLLLLLSGALALTQTWA). Residues 25-114 (RSHSMRYFYT…ALRYYNQSEG (90 aa)) form an alpha-1 region. Residues 25–308 (RSHSMRYFYT…EPSSQPTVPI (284 aa)) are Extracellular-facing. Residue Asn110 is glycosylated (N-linked (GlcNAc...) asparagine). The segment at 115–206 (GSHTMQVMYG…ENGKETLQRA (92 aa)) is alpha-2. Residues 207–298 (DPPKTHMTHH…GLPEPLTLRW (92 aa)) are alpha-3. The Ig-like C1-type domain maps to 209–297 (PKTHMTHHPI…EGLPEPLTLR (89 aa)). Cysteines 227 and 283 form a disulfide. The connecting peptide stretch occupies residues 299 to 308 (EPSSQPTVPI). A helical transmembrane segment spans residues 309–332 (VGIVAGLVLLVAVVTGAVVAAVMW). Over 333–362 (RKKSSDRKGGSYSQAASSNSAQGSDVSLTA) the chain is Cytoplasmic. Residues 337-362 (SDRKGGSYSQAASSNSAQGSDVSLTA) are disordered. The span at 342 to 356 (GSYSQAASSNSAQGS) shows a compositional bias: low complexity.

The protein belongs to the MHC class I family. As to quaternary structure, heterodimer of an alpha chain and a beta chain (beta-2-microglobulin).

The protein resides in the cell membrane. Its function is as follows. Involved in the presentation of foreign antigens to the immune system. This Homo sapiens (Human) protein is Putative HLA class I histocompatibility antigen, alpha chain H (HLA-H).